The chain runs to 931 residues: Transportin (931 aa).

HEAT repeat units lie at residues 10–37 (GLKQ…EELD), 42–79 (VPDY…QYFE), 88–121 (YIKR…KSCF), 127–164 (LLPA…LDSD), 171–201 (NQLI…YFII), 214–241 (FLKG…VTLV), 253–280 (KDVI…FWTA), 296–421 (PVLV…LSGI), 430–459 (VTLP…GAIA), 471–498 (SKVI…TLSR), 512–545 (LHPL…EEEA), 553–586 (LQMI…AKVV), 594–632 (ELIN…SSIG), 640–693 (SLFF…GIGT), 704–735 (LPHL…KFCL), 743–776 (PDYL…IRMP), 784–819 (VAIR…IVSP), 827–860 (DKFI…INNN), and 869–900 (VYIC…KTSM). The 68-residue stretch at 32-99 (IREELDKFHS…KREILPVLSD (68 aa)) folds into the Importin N-terminal domain. Positions 317–401 (DQGDDSMTPD…DDDDDDDGFE (85 aa)) are disordered. The segment covering 358-381 (DNNNNSNNNNSSNNNSSNNNNNNN) has biased composition (low complexity). The span at 382-401 (NEDDEEYNDDDDDDDDDGFE) shows a compositional bias: acidic residues.

This sequence belongs to the importin beta family. Importin beta-2 subfamily. Forms a complex with an importin alpha subunit.

It is found in the cytoplasm. Its subcellular location is the nucleus envelope. Functionally, functions in nuclear protein import via a substrate-importin alpha-beta transport complex that passes though the nuclear pore complexes (NPC). Mediates docking of the substrate-importin complex to distinct nucleoporins. In Dictyostelium discoideum (Social amoeba), this protein is Transportin (tnpo).